Consider the following 301-residue polypeptide: Ubiquinone biosynthesis protein COQ4, mitochondrial (301 aa).

A mitochondrion-targeting transit peptide spans 1 to 46 (MEVTLKRSAALARQTTPLLRPLRPVATYPSNNNNNNNPTPQQRRPY). A disordered region spans residues 14-48 (QTTPLLRPLRPVATYPSNNNNNNNPTPQQRRPYSL). The span at 38–48 (PTPQQRRPYSL) shows a compositional bias: polar residues. The Zn(2+) site is built by H185, D186, H189, and E201.

The protein belongs to the COQ4 family. Component of a multi-subunit COQ enzyme complex, composed of at least COQ3, COQ4, COQ5, COQ6, COQ7 and COQ9. Zn(2+) serves as cofactor.

The protein resides in the mitochondrion inner membrane. It carries out the reaction a 4-hydroxy-3-methoxy-5-(all-trans-polyprenyl)benzoate + H(+) = a 2-methoxy-6-(all-trans-polyprenyl)phenol + CO2. Its pathway is cofactor biosynthesis; ubiquinone biosynthesis. Lyase that catalyzes the C1-decarboxylation of 4-hydroxy-3-methoxy-5-(all-trans-polyprenyl)benzoic acid into 2-methoxy-6-(all-trans-polyprenyl)phenol during ubiquinone biosynthesis. The polypeptide is Ubiquinone biosynthesis protein COQ4, mitochondrial (Podospora anserina (strain S / ATCC MYA-4624 / DSM 980 / FGSC 10383) (Pleurage anserina)).